We begin with the raw amino-acid sequence, 586 residues long: Mitochondrial tRNA methylthiotransferase CDK5RAP1 (586 aa).

Residues 1–30 constitute a mitochondrion transit peptide; it reads MHPLQRVFRAQRLSAPLTSMCWVLLRTFRA. The disordered stretch occupies residues 68-90; the sequence is ASVPQEKPSSPEVEDPPPYLSGD. One can recognise an MTTase N-terminal domain in the interval 97 to 217; the sequence is RKVYLETYGC…LPRLLAVVES (121 aa). Positions 106, 142, 180, 255, 259, and 262 each coordinate [4Fe-4S] cluster. In terms of domain architecture, Radical SAM core spans 241–495; the sequence is SPSATSAFVS…ITVFREEASK (255 aa). The 76-residue stretch at 498–573 folds into the TRAM domain; that stretch reads ATSVGCTQLV…SQTLKGHILC (76 aa).

It belongs to the methylthiotransferase family. MiaB subfamily. As to quaternary structure, interacts with CDK5R1 (p35 form). CDK5RAP1, CDK5RAP2 and CDK5RAP3 show competitive binding to CDK5R1. Forms a complex with CDK5R1 and CDK5. [4Fe-4S] cluster serves as cofactor. Expressed in brain.

It localises to the mitochondrion inner membrane. The catalysed reaction is N(6)-dimethylallyladenosine(37) in tRNA + (sulfur carrier)-SH + AH2 + 2 S-adenosyl-L-methionine = 2-methylsulfanyl-N(6)-dimethylallyladenosine(37) in tRNA + (sulfur carrier)-H + 5'-deoxyadenosine + L-methionine + A + S-adenosyl-L-homocysteine + 2 H(+). Its function is as follows. Methylthiotransferase that catalyzes the conversion of N6-(dimethylallyl)adenosine (i(6)A) to 2-methylthio-N6-(dimethylallyl)adenosine (ms(2)i(6)A) at position 37 (adjacent to the 3'-end of the anticodon) of four mitochondrial DNA-encoded tRNAs (Ser(UCN), Phe, Tyr and Trp). Essential for efficient and highly accurate protein translation by the ribosome. Specifically inhibits CDK5 activation by CDK5R1. Essential for efficient mitochondrial protein synthesis and respiratory chain. In Rattus norvegicus (Rat), this protein is Mitochondrial tRNA methylthiotransferase CDK5RAP1 (Cdk5rap1).